The following is a 259-amino-acid chain: Aminoglycoside 3'-phosphotransferase (259 aa).

Catalysis depends on D187, which acts as the Proton acceptor.

The protein belongs to the aminoglycoside phosphotransferase family.

It catalyses the reaction kanamycin A + ATP = kanamycin 3'-phosphate + ADP + H(+). Its function is as follows. Resistance to kanamycin and structurally-related aminoglycosides, including amikacin. The sequence is that of Aminoglycoside 3'-phosphotransferase (aphA-6) from Acinetobacter baumannii.